The primary structure comprises 521 residues: Bifunctional purine biosynthesis protein PurH (521 aa).

The region spanning 1–145 is the MGS-like domain; sequence MIKQALISVS…KNHRDVTVVV (145 aa).

The protein belongs to the PurH family.

It catalyses the reaction (6R)-10-formyltetrahydrofolate + 5-amino-1-(5-phospho-beta-D-ribosyl)imidazole-4-carboxamide = 5-formamido-1-(5-phospho-D-ribosyl)imidazole-4-carboxamide + (6S)-5,6,7,8-tetrahydrofolate. It carries out the reaction IMP + H2O = 5-formamido-1-(5-phospho-D-ribosyl)imidazole-4-carboxamide. It functions in the pathway purine metabolism; IMP biosynthesis via de novo pathway; 5-formamido-1-(5-phospho-D-ribosyl)imidazole-4-carboxamide from 5-amino-1-(5-phospho-D-ribosyl)imidazole-4-carboxamide (10-formyl THF route): step 1/1. It participates in purine metabolism; IMP biosynthesis via de novo pathway; IMP from 5-formamido-1-(5-phospho-D-ribosyl)imidazole-4-carboxamide: step 1/1. The sequence is that of Bifunctional purine biosynthesis protein PurH from Burkholderia orbicola (strain AU 1054).